We begin with the raw amino-acid sequence, 826 residues long: Ribosome-releasing factor 2, mitochondrial (826 aa).

The transit peptide at 1-44 (MIVRNLLGKNRLCCLQPKLLLSTLSQRPQLQLSLQLLCRATRLY) directs the protein to the mitochondrion. One can recognise a tr-type G domain in the interval 53 to 340 (PKTRNIGIIA…GITNYLPSPL (288 aa)). GTP-binding positions include 62-69 (AHIDAGKT), 126-130 (DTPGH), and 180-183 (NKMD).

This sequence belongs to the TRAFAC class translation factor GTPase superfamily. Classic translation factor GTPase family. EF-G/EF-2 subfamily.

The protein localises to the mitochondrion. In terms of biological role, mitochondrial GTPase that mediates the disassembly of ribosomes from messenger RNA at the termination of mitochondrial protein biosynthesis. Not involved in the GTP-dependent ribosomal translocation step during translation elongation. This is Ribosome-releasing factor 2, mitochondrial from Lodderomyces elongisporus (strain ATCC 11503 / CBS 2605 / JCM 1781 / NBRC 1676 / NRRL YB-4239) (Yeast).